The sequence spans 1137 residues: MSRRKPASGGLAASSSAPARQAVLSRFFQSTGSLKSTSSSTGAADQVDPGAAAAAAAAAAAAPPAPPAPAFPPQLPPHIATEIDRRKKRPLENDGPVKKKVKKVQQKEGGSDLGMSGNSEPKKCLRTRNVSKSLEKLKEFCCDSALPQSRVQTESLQERFAVLPKCTDFDDISLLHAKNAVSSEDSKRQINQKDTTLFDLSQFGSSNTSHENLQKTASKSANKRSKSIYTPLELQYIEMKQQHKDAVLCVECGYKYRFFGEDAEIAARELNIYCHLDHNFMTASIPTHRLFVHVRRLVAKGYKVGVVKQTETAALKAIGDNRSSLFSRKLTALYTKSTLIGEDVNPLIKLDDAVNVDEIMTDTSTSYLLCISENKENVRDKKKGNIFIGIVGVQPATGEVVFDSFQDSASRSELETRMSSLQPVELLLPSALSEQTEALIHRATSVSVQDDRIRVERMDNIYFEYSHAFQAVTEFYAKDTVDIKGSQIISGIVNLEKPVICSLAAIIKYLKEFNLEKMLSKPENFKQLSSKMEFMTINGTTLRNLEILQNQTDMKTKGSLLWVLDHTKTSFGRRKLKKWVTQPLLKLREINARLDAVSEVLHSESSVFGQIENHLRKLPDIERGLCSIYHKKCSTQEFFLIVKTLYHLKSEFQAIIPAVNSHIQSDLLRTVILEIPELLSPVEHYLKILNEQAAKVGDKTELFKDLSDFPLIKKRKDEIQGVIDEIRMHLQEIRKILKNPSAQYVTVSGQEFMIEIKNSAVSCIPTDWVKVGSTKAVSRFHSPFIVENYRHLNQLREQLVLDCSAEWLDFLEKFSEHYHSLCKAVHHLATVDCIFSLAKVAKQGDYCRPTVQEERKIVIKNGRHPVIDVLLGEQDQYVPNNTDLSEDSERVMIITGPNMGGKSSYIKQVALITIMAQIGSYVPAEEATIGIVDGIFTRMGAADNIYKGQSTFMEELTDTAEIIRKATSQSLVILDELGRGTSTHDGIAIAYATLEYFIRDVKSLTLFVTHYPPVCELEKNYSHQVGNYHMGFLVSEDESKLDPGAAEQVPDFVTFLYQITRGIAARSYGLNVAKLADVPGEILKKAAHKSKELEGLINTKRKRLKYFAKLWTMHNAQDLQKWTEEFNMEETQTSLLH.

Low complexity-rich tracts occupy residues 31-42 (TGSLKSTSSSTG) and 51-62 (AAAAAAAAAAAA). Disordered regions lie at residues 31–122 (TGSL…SEPK) and 201–222 (SQFG…KSAN). Ser33 bears the Phosphoserine mark. Residues 63–76 (PPAPPAPAFPPQLP) are compositionally biased toward pro residues. Residues 75 to 297 (LPPHIATEID…HRLFVHVRRL (223 aa)) are interaction with EXO1. Basic and acidic residues predominate over residues 81–97 (TEIDRRKKRPLENDGPV). A compositionally biased stretch (polar residues) spans 201–220 (SQFGSSNTSHENLQKTASKS). 896-903 (GPNMGGKS) provides a ligand contact to ATP. Thr1099 bears the Phosphothreonine mark.

It belongs to the DNA mismatch repair MutS family. MSH3 subfamily. In terms of assembly, component of the DNA mismatch repair (MMR) complex composed at least of MSH2, MSH3, MSH6, PMS1 and MLH1. Heterodimer consisting of MSH2-MSH3 (MutS beta). Forms a ternary complex with MutL alpha (MLH1-PMS1). Interacts with EXO1. Interacts with MCM9.

Component of the post-replicative DNA mismatch repair system (MMR). Heterodimerizes with MSH2 to form MutS beta which binds to DNA mismatches thereby initiating DNA repair. When bound, the MutS beta heterodimer bends the DNA helix and shields approximately 20 base pairs. MutS beta recognizes large insertion-deletion loops (IDL) up to 13 nucleotides long. After mismatch binding, forms a ternary complex with the MutL alpha heterodimer, which is thought to be responsible for directing the downstream MMR events, including strand discrimination, excision, and resynthesis. This Homo sapiens (Human) protein is DNA mismatch repair protein Msh3 (MSH3).